The chain runs to 100 residues: MNQRQLMQMAQQMQRQMQKVQEELAATIVEGTAGGGAITVKMNGHREVQSITISPEVVDPDDVEMLQDLLLVAINDASRKAQQLAEERMQPLTGGLKGLF.

It belongs to the YbaB/EbfC family. In terms of assembly, homodimer.

The protein localises to the cytoplasm. The protein resides in the nucleoid. Functionally, binds to DNA and alters its conformation. May be involved in regulation of gene expression, nucleoid organization and DNA protection. The polypeptide is Nucleoid-associated protein Caur_0522 (Chloroflexus aurantiacus (strain ATCC 29366 / DSM 635 / J-10-fl)).